A 123-amino-acid polypeptide reads, in one-letter code: UPF0102 protein PSPPH_4120 (123 aa).

This sequence belongs to the UPF0102 family.

This Pseudomonas savastanoi pv. phaseolicola (strain 1448A / Race 6) (Pseudomonas syringae pv. phaseolicola (strain 1448A / Race 6)) protein is UPF0102 protein PSPPH_4120.